The primary structure comprises 149 residues: SsrA-binding protein (149 aa).

The tract at residues 123-149 (KQFDKRETEKQRDWQREKARIMKGGKE) is disordered.

It belongs to the SmpB family.

The protein localises to the cytoplasm. In terms of biological role, required for rescue of stalled ribosomes mediated by trans-translation. Binds to transfer-messenger RNA (tmRNA), required for stable association of tmRNA with ribosomes. tmRNA and SmpB together mimic tRNA shape, replacing the anticodon stem-loop with SmpB. tmRNA is encoded by the ssrA gene; the 2 termini fold to resemble tRNA(Ala) and it encodes a 'tag peptide', a short internal open reading frame. During trans-translation Ala-aminoacylated tmRNA acts like a tRNA, entering the A-site of stalled ribosomes, displacing the stalled mRNA. The ribosome then switches to translate the ORF on the tmRNA; the nascent peptide is terminated with the 'tag peptide' encoded by the tmRNA and targeted for degradation. The ribosome is freed to recommence translation, which seems to be the essential function of trans-translation. This is SsrA-binding protein from Cupriavidus taiwanensis (strain DSM 17343 / BCRC 17206 / CCUG 44338 / CIP 107171 / LMG 19424 / R1) (Ralstonia taiwanensis (strain LMG 19424)).